The sequence spans 259 residues: uncharacterized protein (259 aa).

This is an uncharacterized protein from Aquifex aeolicus (strain VF5).